The chain runs to 179 residues: Pyridoxal 5'-phosphate synthase subunit PdxT (179 aa).

48 to 50 (GES) provides a ligand contact to L-glutamine. C79 (nucleophile) is an active-site residue. L-glutamine is bound by residues R101 and 127-128 (IR). Catalysis depends on charge relay system residues H163 and E165.

The protein belongs to the glutaminase PdxT/SNO family. As to quaternary structure, in the presence of PdxS, forms a dodecamer of heterodimers. Only shows activity in the heterodimer.

The enzyme catalyses aldehydo-D-ribose 5-phosphate + D-glyceraldehyde 3-phosphate + L-glutamine = pyridoxal 5'-phosphate + L-glutamate + phosphate + 3 H2O + H(+). It carries out the reaction L-glutamine + H2O = L-glutamate + NH4(+). It participates in cofactor biosynthesis; pyridoxal 5'-phosphate biosynthesis. In terms of biological role, catalyzes the hydrolysis of glutamine to glutamate and ammonia as part of the biosynthesis of pyridoxal 5'-phosphate. The resulting ammonia molecule is channeled to the active site of PdxS. The polypeptide is Pyridoxal 5'-phosphate synthase subunit PdxT (Francisella tularensis subsp. tularensis (strain FSC 198)).